The primary structure comprises 418 residues: Phosphopentomutase (418 aa).

Residues D10, D297, H302, D338, H339, and H350 each coordinate Mn(2+).

It belongs to the phosphopentomutase family. It depends on Mn(2+) as a cofactor.

The protein resides in the cytoplasm. It carries out the reaction 2-deoxy-alpha-D-ribose 1-phosphate = 2-deoxy-D-ribose 5-phosphate. The catalysed reaction is alpha-D-ribose 1-phosphate = D-ribose 5-phosphate. It functions in the pathway carbohydrate degradation; 2-deoxy-D-ribose 1-phosphate degradation; D-glyceraldehyde 3-phosphate and acetaldehyde from 2-deoxy-alpha-D-ribose 1-phosphate: step 1/2. Functionally, isomerase that catalyzes the conversion of deoxy-ribose 1-phosphate (dRib-1-P) and ribose 1-phosphate (Rib-1-P) to deoxy-ribose 5-phosphate (dRib-5-P) and ribose 5-phosphate (Rib-5-P), respectively. The chain is Phosphopentomutase from Chromohalobacter salexigens (strain ATCC BAA-138 / DSM 3043 / CIP 106854 / NCIMB 13768 / 1H11).